Consider the following 202-residue polypeptide: uncharacterized protein (202 aa).

Residues 179–202 (FDEQDSTPELPPNYLLDSQKKSQG) form a disordered region.

This is an uncharacterized protein from Haemophilus influenzae (strain ATCC 51907 / DSM 11121 / KW20 / Rd).